We begin with the raw amino-acid sequence, 177 residues long: ATP synthase subunit delta (177 aa).

It belongs to the ATPase delta chain family. In terms of assembly, F-type ATPases have 2 components, F(1) - the catalytic core - and F(0) - the membrane proton channel. F(1) has five subunits: alpha(3), beta(3), gamma(1), delta(1), epsilon(1). F(0) has three main subunits: a(1), b(2) and c(10-14). The alpha and beta chains form an alternating ring which encloses part of the gamma chain. F(1) is attached to F(0) by a central stalk formed by the gamma and epsilon chains, while a peripheral stalk is formed by the delta and b chains.

The protein localises to the cell inner membrane. F(1)F(0) ATP synthase produces ATP from ADP in the presence of a proton or sodium gradient. F-type ATPases consist of two structural domains, F(1) containing the extramembraneous catalytic core and F(0) containing the membrane proton channel, linked together by a central stalk and a peripheral stalk. During catalysis, ATP synthesis in the catalytic domain of F(1) is coupled via a rotary mechanism of the central stalk subunits to proton translocation. In terms of biological role, this protein is part of the stalk that links CF(0) to CF(1). It either transmits conformational changes from CF(0) to CF(1) or is implicated in proton conduction. This Neisseria gonorrhoeae (strain ATCC 700825 / FA 1090) protein is ATP synthase subunit delta.